Consider the following 582-residue polypeptide: Mitogen-activated protein kinase 17 (582 aa).

Positions 22–61 are disordered; sequence SSSFHLTTTGDDTVKDLHDPRREDAEGDGWEEVHEGPESD. Basic and acidic residues predominate over residues 33 to 45; sequence DTVKDLHDPRRED. The 292-residue stretch at 105 to 396 folds into the Protein kinase domain; it reads YKVSEVIGKG…AEEALTDPYF (292 aa). ATP-binding positions include 111 to 119 and K134; that span reads IGKGSYGVV. The active-site Proton acceptor is D231. Phosphothreonine is present on T267. Positions 267–269 match the TXY motif; the sequence is TDY. Y269 is modified (phosphotyrosine). Disordered stretches follow at residues 474 to 502 and 542 to 582; these read EGVS…GNKH and ISAS…QLKT. A compositionally biased stretch (polar residues) spans 482-491; the sequence is SSPQLRQNAS. Residues 493 to 502 are compositionally biased toward basic and acidic residues; the sequence is PRERAIGNKH. A compositionally biased stretch (acidic residues) spans 557 to 572; the sequence is DQEDSLTESMDETADE.

This sequence belongs to the protein kinase superfamily. CMGC Ser/Thr protein kinase family. MAP kinase subfamily. Post-translationally, dually phosphorylated on Thr-267 and Tyr-269, which activates the enzyme.

It carries out the reaction L-seryl-[protein] + ATP = O-phospho-L-seryl-[protein] + ADP + H(+). The catalysed reaction is L-threonyl-[protein] + ATP = O-phospho-L-threonyl-[protein] + ADP + H(+). With respect to regulation, activated by threonine and tyrosine phosphorylation. The chain is Mitogen-activated protein kinase 17 (MPK17) from Oryza sativa subsp. japonica (Rice).